A 959-amino-acid chain; its full sequence is MSSDEKGISPAHKTSTPTHRSASSSTSSQRESRQSIHVLERTASSSTEPSVSRQLLEPEPIPLSKEADSWEIIEGLKIGQTNVQKPDRHEGFMLKKRKWPLKGWHKRFFVLDNGMLKYSKAPLDIQKGKVHGSIDVGLSVMSIKKKARRIDLDTEEHIYHLKVKSQDWFDAWVSKLRHHRLYRQNEIVRSPRDASFHIFPATSTAESSPAANVSVVDGKMQPNSFPWQSPLPCSNSLPATCTTGQSKVAAWLQDSEEMDRCAEDLAHCQSNLVELSKLLQNLEILQRTQSAPNFTDMQANCVDISKKDKRVTRRWRTKSVSKDTKIQLQEGPPAKGQFNTTRRRQRLAAAVATTVPFSATMSPVRLHSSNPNLCADIEFQTPPSHLTDPLESSTDYTKLQEEFCLIAQKVHSLLKSAFNSIAIEKEKLKQVVSEQDHNKGHSTQMARLRQSLSQALNQNAELRSRLNRIHSESTICDHVVSVNIIPSPDEPGEQIHVSLPLSQQVANESRLSMSESVSEFFDAQEVLLSASSSENEASDDESYISDVSDNISEDNTSVADNISRQILNGELTGGAFRNGRRTCLPAPCPDTSNINLWNILRNNIGKDLSKVSMPVELNEPLNTLQHLCEEMEYSELLDKASETDDPYERMVLVAAFAVSGYCSTYFRAGSKPFNPVLGETYECIREDKGFRFFSEQVSHHPPISACHCESKNFVFWQDIRWKNKFWGKSMEILPVGTLNVTLPKYGDYYVWNKVTTCIHNILSGRRWIEHYGEVTLRNTKSSVCICKLTFVKVNYWNSNVNEVQGVVIDQEGKVVHRLFGKWHEGLYCGVAPSAKCIWRPGSLPTNYELYYGFTRFAVELNELDPVLKDLLPPTDARFRPDQRFLEEGNLEAAAAEKQRVEELQRSRRRYMEENNLEHIPKFFKKVIDANQREAWVSNDTYWELRKDPGFSKVDSPVLW.

The tract at residues 1–60 (MSSDEKGISPAHKTSTPTHRSASSSTSSQRESRQSIHVLERTASSSTEPSVSRQLLEPEP) is disordered. Ser2 carries the post-translational modification N-acetylserine. Residues 14-29 (TSTPTHRSASSSTSSQ) are compositionally biased toward low complexity. Positions 30 to 40 (RESRQSIHVLE) are enriched in basic and acidic residues. The residue at position 35 (Ser35) is a Phosphoserine. A compositionally biased stretch (polar residues) spans 42–53 (TASSSTEPSVSR). The 96-residue stretch at 86–181 (PDRHEGFMLK…WVSKLRHHRL (96 aa)) folds into the PH domain. Ser190 and Ser290 each carry phosphoserine.

Belongs to the OSBP family. Homodimer. Interacts with OSBPL3. Expressed in skin, respiratory epithelium, small intestine epithelium, pancreas, striated muscle, brain, spinal ganglia, and nervous plexus of the intestine (at protein level). In the brain, specifically in the cerebellum, it is expressed in Purkinje and granule cells. Expressed in hepatocytes and macrophages.

It localises to the nucleus envelope. It is found in the cytoplasm. Its subcellular location is the cytosol. The protein resides in the endoplasmic reticulum membrane. The protein localises to the cell membrane. It localises to the endosome membrane. In terms of biological role, regulates cellular transport and efflux of cholesterol. Plays a role in phosphatidylinositol-4-phophate (PI4P) turnover at the neuronal membrane. Binds via its PH domain PI4P, phosphatidylinositol-4,5-diphosphate, phosphatidylinositol-3,4,5-triphosphate, and phosphatidic acid. Weakly binds 25-hydroxycholesterol. This Mus musculus (Mouse) protein is Oxysterol-binding protein-related protein 6 (Osbpl6).